Consider the following 746-residue polypeptide: Exostosin-1 (746 aa).

Residues 1–7 (MQAKKRY) lie on the Cytoplasmic side of the membrane. The helical; Signal-anchor for type II membrane protein transmembrane segment at 8–28 (FILLSAGSCLALLFYFGGLQF) threads the bilayer. The Lumenal portion of the chain corresponds to 29 to 746 (RASRSHSRRE…RKKYRDIERL (718 aa)). N-linked (GlcNAc...) asparagine glycosylation is present at N89. 2 cysteine pairs are disulfide-bonded: C98–C103 and C109–C152. A protein contacts are provided by L166 and Y203. Residues K267, K269, Y271, and R280 each coordinate UDP. A disulfide bond links C298 and C312. H300 is a binding site for a protein. Positions 319 and 324 each coordinate UDP. The N-linked (GlcNAc...) asparagine glycan is linked to N330. Intrachain disulfides connect C334–C355 and C652–C704. UDP-binding residues include R346 and E349.

This sequence belongs to the glycosyltransferase 47 family. Part of the heparan sulfate polymerase, a dimeric complex composed of EXT1 and EXT2. Could also form homooligomeric complexes. Interacts with NDST1. N-glycosylated.

It localises to the golgi apparatus membrane. Its subcellular location is the golgi apparatus. It is found in the cis-Golgi network membrane. The protein resides in the endoplasmic reticulum membrane. The enzyme catalyses 3-O-{alpha-D-GlcNAc-[(1-&gt;4)-beta-D-GlcA-(1-&gt;4)-alpha-D-GlcNAc](n)-(1-&gt;4)-beta-D-GlcA-(1-&gt;3)-beta-D-Gal-(1-&gt;3)-beta-D-Gal-(1-&gt;4)-beta-D-Xyl}-L-seryl-[protein] + UDP-alpha-D-glucuronate = 3-O-{[(1-&gt;4)-beta-D-GlcA-(1-&gt;4)-alpha-D-GlcNAc](n+1)-(1-&gt;4)-beta-D-GlcA-(1-&gt;3)-beta-D-Gal-(1-&gt;3)-beta-D-Gal-(1-&gt;4)-beta-D-Xyl}-L-seryl-[protein] + UDP + H(+). The protein operates within protein modification; protein glycosylation. Its function is as follows. Glycosyltransferase forming with EXT2 the heterodimeric heparan sulfate polymerase which catalyzes the elongation of the heparan sulfate glycan backbone. Glycan backbone extension consists in the alternating transfer of (1-&gt;4)-beta-D-GlcA and (1-&gt;4)-alpha-D-GlcNAc residues from their respective UDP-sugar donors. Both EXT1 and EXT2 are required for the full activity of the polymerase since EXT1 bears the N-acetylglucosaminyl-proteoglycan 4-beta-glucuronosyltransferase activity within the complex while EXT2 carries the glucuronosyl-N-acetylglucosaminyl-proteoglycan 4-alpha-N-acetylglucosaminyltransferase activity. Heparan sulfate proteoglycans are ubiquitous components of the extracellular matrix and play an important role in tissue homeostasis and signaling. The protein is Exostosin-1 (EXT1) of Pongo abelii (Sumatran orangutan).